The following is a 132-amino-acid chain: Small ribosomal subunit protein uS8 (132 aa).

Belongs to the universal ribosomal protein uS8 family. As to quaternary structure, part of the 30S ribosomal subunit. Contacts proteins S5 and S12.

In terms of biological role, one of the primary rRNA binding proteins, it binds directly to 16S rRNA central domain where it helps coordinate assembly of the platform of the 30S subunit. The sequence is that of Small ribosomal subunit protein uS8 from Caldicellulosiruptor bescii (strain ATCC BAA-1888 / DSM 6725 / KCTC 15123 / Z-1320) (Anaerocellum thermophilum).